We begin with the raw amino-acid sequence, 370 residues long: Actin-related protein 2/3 complex subunit 1A-A (370 aa).

WD repeat units follow at residues Phe6–Gly45, Glu50–Thr89, Pro140–Lys179, Ser202–Gln241, Thr244–Ser284, and Leu322–Gln365.

The protein belongs to the WD repeat ARPC1 family. As to quaternary structure, component of the Arp2/3 complex.

It is found in the cytoplasm. It localises to the cytoskeleton. The protein localises to the nucleus. In terms of biological role, probably functions as a component of the Arp2/3 complex which is involved in regulation of actin polymerization and together with an activating nucleation-promoting factor (NPF) mediates the formation of branched actin networks. In addition to its role in the cytoplasmic cytoskeleton, the Arp2/3 complex also promotes actin polymerization in the nucleus, thereby regulating gene transcription and repair of damaged DNA. The chain is Actin-related protein 2/3 complex subunit 1A-A (arpc1a-a) from Xenopus laevis (African clawed frog).